The sequence spans 92 residues: Trp operon repressor homolog (92 aa).

Residues 56-79 (QREVASKLGVSITKITRGAANLQD) mediate DNA binding.

It belongs to the TrpR family. As to quaternary structure, homodimer.

The protein resides in the cytoplasm. This protein is an aporepressor. When complexed with L-tryptophan it binds the operator region of the trp operon and prevents the initiation of transcription. This Xylella fastidiosa (strain M23) protein is Trp operon repressor homolog.